The primary structure comprises 531 residues: Acid-sensing ion channel 3 (531 aa).

Topologically, residues 1-43 (MKPTSGPEEARRPASDIRVFASNCSMHGLGHVFGPGSLSLRRG) are cytoplasmic. A helical transmembrane segment spans residues 44-61 (MWAAAVVLSVATFLYQVA). At 62–441 (ERVRYYREFH…SELLGDIGGQ (380 aa)) the chain is on the extracellular side. 7 disulfide bridges follow: cysteine 92–cysteine 186, cysteine 164–cysteine 171, cysteine 282–cysteine 370, cysteine 315–cysteine 366, cysteine 319–cysteine 364, cysteine 328–cysteine 350, and cysteine 330–cysteine 342. Residue asparagine 175 is glycosylated (N-linked (GlcNAc...) asparagine). Residues 285–307 (ASLNPNYEPEPSDPLGSPSPSPS) are disordered. Residue asparagine 398 is glycosylated (N-linked (GlcNAc...) asparagine). Residues 442–460 (MGLFIGASLLTILEILDYL) form a helical membrane-spanning segment. The short motif at 447–449 (GAS) is the GAS motif; ion selectivity filter element. Residues 461 to 531 (CEVFRDKVLG…HRTCYLVTQL (71 aa)) are Cytoplasmic-facing. The PDZ-binding motif lies at 528-531 (VTQL).

Belongs to the amiloride-sensitive sodium channel (TC 1.A.6) family. ASIC3 subfamily. In terms of assembly, can form homotrimeric channels. Heterotrimer; forms functional heterotrimers producing channel with different properties. Forms heterotrimers with ASIC2; gives rise to a biphasic current with a sustained current which discriminates poorly between Na(+) and K(+). Interacts with STOM; inhibits ASIC3 acid-evoked current. Interacts with LIN7B (via PDZ domain); increases ASIC3 expression at the plasma membrane. Interacts with MAGI1 (via PDZ domain); probably regulates ASIC3. Interacts with GOPC (via PDZ domain); probably regulates ASIC3. Interacts with DLG4 (via PDZ domain); reduces ASIC3 expression at the plasma membrane. In terms of tissue distribution, expressed by sensory neurons. Strongly expressed in brain, spinal cord, lung, lymph nodes, kidney, pituitary, heart and testis.

It localises to the cell membrane. The protein localises to the cytoplasm. The catalysed reaction is Na(+)(in) = Na(+)(out). The enzyme catalyses K(+)(in) = K(+)(out). It catalyses the reaction Ca(2+)(in) = Ca(2+)(out). Its activity is regulated as follows. Inhibited by the diuretic drug amiloride. Inhibited by the diuretic drug triamterene. Potentiated by the vertebrate neuropeptide FF (NPFF) and the related FMRFamide. Specifically and reversibly inhibited by the a sea anemone toxin APETx2. Forms pH-gated heterotrimeric sodium channels that act as postsynaptic excitatory receptors in the nervous system. Upon extracellular acidification, these channels generate a biphasic current with a fast inactivating and a slow sustained phase. ASIC3 is more sensitive to protons and gates between closed, open, and desensitized states faster than other ASICs. Displays high selectivity for sodium ions but can also permit the permeation of other cations. As a neuronal acid sensor, probably contributes to mechanoreception, acid nociception, and heat nociception. By forming heterotrimeric channels with ASIC2, generates a biphasic current with a fast inactivating and a slow sustained phase, which in sensory neurons is proposed to mediate the pain induced by acidosis that occurs in ischemic, damaged or inflamed tissues. This is Acid-sensing ion channel 3 from Homo sapiens (Human).